We begin with the raw amino-acid sequence, 129 residues long: Small ribosomal subunit protein uS11 (129 aa).

It belongs to the universal ribosomal protein uS11 family. Part of the 30S ribosomal subunit. Interacts with proteins S7 and S18. Binds to IF-3.

Functionally, located on the platform of the 30S subunit, it bridges several disparate RNA helices of the 16S rRNA. Forms part of the Shine-Dalgarno cleft in the 70S ribosome. The polypeptide is Small ribosomal subunit protein uS11 (Azoarcus sp. (strain BH72)).